The following is a 302-amino-acid chain: Glycine--tRNA ligase alpha subunit (302 aa).

This sequence belongs to the class-II aminoacyl-tRNA synthetase family. As to quaternary structure, tetramer of two alpha and two beta subunits.

It is found in the cytoplasm. The catalysed reaction is tRNA(Gly) + glycine + ATP = glycyl-tRNA(Gly) + AMP + diphosphate. The chain is Glycine--tRNA ligase alpha subunit from Xanthomonas oryzae pv. oryzae (strain MAFF 311018).